The sequence spans 284 residues: Tropomyosin (284 aa).

Residues Met1–Asn284 adopt a coiled-coil conformation.

It belongs to the tropomyosin family. In terms of assembly, homodimer.

Functionally, tropomyosin, in association with the troponin complex, plays a central role in the calcium dependent regulation of muscle contraction. In Blattella germanica (German cockroach), this protein is Tropomyosin.